The chain runs to 403 residues: Casein kinase II subunit alpha-2 (403 aa).

Residues 1 to 31 (MHLIFFFSYFLRRYLLLLCAILILRAPLAHS) form the signal peptide. Residues 104–389 (YEVVRKVGRG…AKEAMAHPYF (286 aa)) form the Protein kinase domain. ATP-binding positions include 110–118 (VGRGKYSEV) and lysine 133. Asparagine 182 is a glycosylation site (N-linked (GlcNAc...) asparagine). Aspartate 221 serves as the catalytic Proton acceptor.

This sequence belongs to the protein kinase superfamily. Ser/Thr protein kinase family. CK2 subfamily. As to quaternary structure, heterotetramer of two catalytic alpha subunits and two regulatory beta subunits. In terms of tissue distribution, seems to be present in all plant organs. But seems to be more expressed than CKA1.

It localises to the nucleus. It is found in the nucleolus. It catalyses the reaction L-seryl-[protein] + ATP = O-phospho-L-seryl-[protein] + ADP + H(+). The catalysed reaction is L-threonyl-[protein] + ATP = O-phospho-L-threonyl-[protein] + ADP + H(+). Its function is as follows. Casein kinases are operationally defined by their preferential utilization of acidic proteins such as caseins as substrates. The alpha chain contains the catalytic site. The tetrameric holoenzyme CK2, composed of two alpha and two beta subunits, phosphorylates the transcription factor PIF1 after an exposure to light, resulting in a proteasome-dependent degradation of PIF1 and promotion of photomorphogenesis. CK2 phosphorylates translation initiation factors. May participate in the regulation of the initiation of translation. Acts as circadian clock component that maintains the correct period length through phosphorylation of CCA1. May act as an ectokinase that phosphorylates several extracellular proteins. The protein is Casein kinase II subunit alpha-2 of Arabidopsis thaliana (Mouse-ear cress).